The chain runs to 185 residues: Ribose 1,5-bisphosphate phosphokinase PhnN (185 aa).

Residue 13 to 20 (GPSGAGKD) participates in ATP binding.

It belongs to the ribose 1,5-bisphosphokinase family.

It catalyses the reaction alpha-D-ribose 1,5-bisphosphate + ATP = 5-phospho-alpha-D-ribose 1-diphosphate + ADP. It participates in metabolic intermediate biosynthesis; 5-phospho-alpha-D-ribose 1-diphosphate biosynthesis; 5-phospho-alpha-D-ribose 1-diphosphate from D-ribose 5-phosphate (route II): step 3/3. Functionally, catalyzes the phosphorylation of ribose 1,5-bisphosphate to 5-phospho-D-ribosyl alpha-1-diphosphate (PRPP). This Chromobacterium violaceum (strain ATCC 12472 / DSM 30191 / JCM 1249 / CCUG 213 / NBRC 12614 / NCIMB 9131 / NCTC 9757 / MK) protein is Ribose 1,5-bisphosphate phosphokinase PhnN.